The primary structure comprises 170 residues: Transcriptional repressor NrdR (170 aa).

A zinc finger spans residues 3-34; it reads CPFCRHPDSRVVDSRTSEDGSSIRRRRQCPEC. The 91-residue stretch at 46 to 136 folds into the ATP-cone domain; sequence LSVVKRSGVA…VYRGFSSLED (91 aa). The tract at residues 148-170 is disordered; sequence RENEGDPDADGSADAPVRLTTSV.

This sequence belongs to the NrdR family. Requires Zn(2+) as cofactor.

Negatively regulates transcription of bacterial ribonucleotide reductase nrd genes and operons by binding to NrdR-boxes. This Beutenbergia cavernae (strain ATCC BAA-8 / DSM 12333 / CCUG 43141 / JCM 11478 / NBRC 16432 / NCIMB 13614 / HKI 0122) protein is Transcriptional repressor NrdR.